The sequence spans 776 residues: Reticulon-1 (776 aa).

Disordered regions lie at residues 1 to 101 (MAAP…KDGE), 137 to 168 (SESPEELGTPGPSLPDVPGIESRGLFSSDSGI), 205 to 245 (VKHQ…PAPV), and 285 to 580 (LTEI…APPP). Residue Ser-327 is modified to Phosphoserine. Residues 328–341 (PGSITPPSSGTEPS) are compositionally biased toward low complexity. Residues Ser-350, Ser-352, and Ser-487 each carry the phosphoserine modification. Residues 497 to 511 (AIREETGVRAEERAP) are compositionally biased toward basic and acidic residues. The region spanning 589-776 (AIDLLYWRDI…KIPGAKRHAE (188 aa)) is the Reticulon domain. 2 consecutive transmembrane segments (helical) span residues 603 to 623 (IVFGSFLLLLFSLTQFSVVSV) and 705 to 725 (FAVLMWLLTYVGALFNGLTLL).

As to quaternary structure, interacts with NDRG1. Interacts with BACE1. Interacts with TMEM33. In terms of assembly, interacts with UGCG; regulates the ceramide glucosyltransferase activity of UGCG. In terms of processing, isoforms RTN1-A and RTN1-B are phosphorylated. Expressed in neural and neuroendocrine tissues and cell cultures derived therefrom. Expression of isoform RTN1-C is strongly correlated with neuronal differentiation.

The protein localises to the endoplasmic reticulum membrane. The protein resides in the golgi apparatus membrane. Its function is as follows. Inhibits amyloid precursor protein processing, probably by blocking BACE1 activity. The protein is Reticulon-1 (RTN1) of Homo sapiens (Human).